The sequence spans 170 residues: Lipoprotein signal peptidase (170 aa).

Transmembrane regions (helical) follow at residues 11 to 31 (LGWL…KLHF), 41 to 61 (IVVI…AAFS), 69 to 89 (WQRW…VVWL), and 95 to 115 (NETW…GNLY). Catalysis depends on residues aspartate 125 and aspartate 144. A helical membrane pass occupies residues 136–156 (YFPAFNFADSAITVGAVMLAL).

Belongs to the peptidase A8 family.

The protein localises to the cell inner membrane. The enzyme catalyses Release of signal peptides from bacterial membrane prolipoproteins. Hydrolyzes -Xaa-Yaa-Zaa-|-(S,diacylglyceryl)Cys-, in which Xaa is hydrophobic (preferably Leu), and Yaa (Ala or Ser) and Zaa (Gly or Ala) have small, neutral side chains.. The protein operates within protein modification; lipoprotein biosynthesis (signal peptide cleavage). Functionally, this protein specifically catalyzes the removal of signal peptides from prolipoproteins. The sequence is that of Lipoprotein signal peptidase from Pseudomonas fluorescens (strain ATCC BAA-477 / NRRL B-23932 / Pf-5).